Reading from the N-terminus, the 60-residue chain is MLKVAVFDEEHEKDLQTEINSFLKGISEEQLIDIKYTVSAACDPDGEQLYCFSALILYRK.

In Bacillus subtilis (strain 168), this protein is Sporulation protein cse60 (cse60).